The primary structure comprises 378 residues: MKLSFDLKKKNGNARRGQLTFERGTVQTPAFMPVGTYGTVKGMTPEEVKGTGAEILLGNTFHLWLRPGQEVMKMHGDLHDFMNWHGPILTDSGGFQVFSLGKMRKITEKGVHFRSPVNGDKIFMDAEKSMEIQKDLGSDIVMIFDECTPYPATHNEAKKSMEMSLRWAQRSRDHFDKLENPNNLFGIVQGGVYEDLRDVSIKGLTEIGFDGYAVGGLAVGEPKEDMHRILEHTCPQLPEDKPRYLMGVGKPEDLVEGVRRGIDMFDCVMPTRNARNGHLFVTGGVIKIRNAKHKTDTTPLDPHCDCYTCQHYSKSYLHHLERCNEILGARLNTIHNLRYYQRLMESIRKAIDEDRFDEFVTEFYERRGREVPPLAKEQ.

The active-site Proton acceptor is Asp-91. Residues 91–95 (DSGGF), Asp-145, Gln-189, and Gly-216 each bind substrate. Residues 247–253 (GVGKPED) form an RNA binding region. Asp-266 serves as the catalytic Nucleophile. Residues 271-275 (TRNAR) form an RNA binding; important for wobble base 34 recognition region. The Zn(2+) site is built by Cys-304, Cys-306, Cys-309, and His-335.

The protein belongs to the queuine tRNA-ribosyltransferase family. As to quaternary structure, homodimer. Within each dimer, one monomer is responsible for RNA recognition and catalysis, while the other monomer binds to the replacement base PreQ1. Requires Zn(2+) as cofactor.

The catalysed reaction is 7-aminomethyl-7-carbaguanine + guanosine(34) in tRNA = 7-aminomethyl-7-carbaguanosine(34) in tRNA + guanine. It functions in the pathway tRNA modification; tRNA-queuosine biosynthesis. Functionally, catalyzes the base-exchange of a guanine (G) residue with the queuine precursor 7-aminomethyl-7-deazaguanine (PreQ1) at position 34 (anticodon wobble position) in tRNAs with GU(N) anticodons (tRNA-Asp, -Asn, -His and -Tyr). Catalysis occurs through a double-displacement mechanism. The nucleophile active site attacks the C1' of nucleotide 34 to detach the guanine base from the RNA, forming a covalent enzyme-RNA intermediate. The proton acceptor active site deprotonates the incoming PreQ1, allowing a nucleophilic attack on the C1' of the ribose to form the product. After dissociation, two additional enzymatic reactions on the tRNA convert PreQ1 to queuine (Q), resulting in the hypermodified nucleoside queuosine (7-(((4,5-cis-dihydroxy-2-cyclopenten-1-yl)amino)methyl)-7-deazaguanosine). In Vibrio campbellii (strain ATCC BAA-1116), this protein is Queuine tRNA-ribosyltransferase.